Consider the following 660-residue polypeptide: Bifunctional polymyxin resistance protein ArnA (660 aa).

Residues 1-304 (MKAVIFAYHD…TLGLVAGARL (304 aa)) are formyltransferase ArnAFT. His-104 acts as the Proton donor; for formyltransferase activity in catalysis. Residues Arg-114 and 136–140 (VKRAD) each bind (6R)-10-formyltetrahydrofolate. The dehydrogenase ArnADH stretch occupies residues 314 to 660 (RRIRVLILGV…RSVDIAERAS (347 aa)). NAD(+) is bound by residues Asp-347 and 368-369 (DI). UDP-alpha-D-glucuronate contacts are provided by residues Ala-393, Tyr-398, and 432 to 433 (TS). Catalysis depends on Glu-434, which acts as the Proton acceptor; for decarboxylase activity. UDP-alpha-D-glucuronate is bound by residues Arg-460, Asn-492, 526 to 535 (KLIDGGQQKR), and Tyr-613. Residue Arg-619 is the Proton donor; for decarboxylase activity of the active site.

The protein in the N-terminal section; belongs to the Fmt family. UDP-L-Ara4N formyltransferase subfamily. This sequence in the C-terminal section; belongs to the NAD(P)-dependent epimerase/dehydratase family. UDP-glucuronic acid decarboxylase subfamily. Homohexamer, formed by a dimer of trimers.

It carries out the reaction UDP-alpha-D-glucuronate + NAD(+) = UDP-beta-L-threo-pentopyranos-4-ulose + CO2 + NADH. The catalysed reaction is UDP-4-amino-4-deoxy-beta-L-arabinose + (6R)-10-formyltetrahydrofolate = UDP-4-deoxy-4-formamido-beta-L-arabinose + (6S)-5,6,7,8-tetrahydrofolate + H(+). It participates in nucleotide-sugar biosynthesis; UDP-4-deoxy-4-formamido-beta-L-arabinose biosynthesis; UDP-4-deoxy-4-formamido-beta-L-arabinose from UDP-alpha-D-glucuronate: step 1/3. The protein operates within nucleotide-sugar biosynthesis; UDP-4-deoxy-4-formamido-beta-L-arabinose biosynthesis; UDP-4-deoxy-4-formamido-beta-L-arabinose from UDP-alpha-D-glucuronate: step 3/3. Its pathway is bacterial outer membrane biogenesis; lipopolysaccharide biosynthesis. Bifunctional enzyme that catalyzes the oxidative decarboxylation of UDP-glucuronic acid (UDP-GlcUA) to UDP-4-keto-arabinose (UDP-Ara4O) and the addition of a formyl group to UDP-4-amino-4-deoxy-L-arabinose (UDP-L-Ara4N) to form UDP-L-4-formamido-arabinose (UDP-L-Ara4FN). The modified arabinose is attached to lipid A and is required for resistance to polymyxin and cationic antimicrobial peptides. The polypeptide is Bifunctional polymyxin resistance protein ArnA (Salmonella schwarzengrund (strain CVM19633)).